A 741-amino-acid polypeptide reads, in one-letter code: MALFTPWKLSSQKLGFFLVTFGFIWGMMLLHFTIQQRTQPESSSMLREQILDLSKRYIKALAEENRNVVDGPYAGVMTAYDLKKTLAVLLDNILQRIGKLESKVDNLVVNGTGTNSTNSTTAVPSLVALEKINVADIINGAQEKCVLPPMDGYPHCEGKIKWMKDMWRSDPCYADYGVDGSTCSFFIYLSEVENWCPHLPWRAKNPYEEADHNSLAEIRTDFNILYSMMKKHEEFRWMRLRIRRMADAWIQAIKSLAEKQNLEKRKRKKVLVHLGLLTKESGFKIAETAFSGGPLGELVQWSDLITSLYLLGHDIRISASLAELKEIMKKVVGNRSGCPTVGDRIVELIYIDIVGLAQFKKTLGPSWVHYQCMLRVLDSFGTEPEFNHANYAQSKGHKTPWGKWNLNPQQFYTMFPHTPDNSFLGFVVEQHLNSSDIHHINEIKRQNQSLVYGKVDSFWKNKKIYLDIIHTYMEVHATVYGSSTKNIPSYVKNHGILSGRDLQFLLRETKLFVGLGFPYEGPAPLEAIANGCAFLNPKFNPPKSSKNTDFFIGKPTLRELTSQHPYAEVFIGRPHVWTVDLNNQEEVEDAVKAILNQKIEPYMPYEFTCEGMLQRINAFIEKQDFCHGQVMWPPLSALQVKLAEPGQSCKQVCQESQLICEPSFFQHLNKDKDMLKYKVTCQSSELAKDILVPSFDPKNKHCVFQGDLLLFSCAGAHPRHQRVCPCRDFIKGQVALCKDCL.

Residues 1 to 13 (MALFTPWKLSSQK) are Cytoplasmic-facing. A helical; Signal-anchor for type II membrane protein membrane pass occupies residues 14-30 (LGFFLVTFGFIWGMMLL). Over 31 to 741 (HFTIQQRTQP…GQVALCKDCL (711 aa)) the chain is Lumenal. N-linked (GlcNAc...) asparagine glycosylation is found at Asn110, Asn115, and Asn118. Intrachain disulfides connect Cys145-Cys183, Cys156-Cys196, Cys172-Cys338, Cys372-Cys626, Cys649-Cys724, Cys653-Cys726, Cys660-Cys713, Cys681-Cys702, and Cys737-Cys740. A sufficient for catalytic activity region spans residues 213-741 (NSLAEIRTDF…GQVALCKDCL (529 aa)). The important for activity in FGF2 release stretch occupies residues 264-269 (KRKRKK). Residue Asn334 is glycosylated (N-linked (GlcNAc...) asparagine). Substrate is bound at residue 378–379 (DS). N-linked (GlcNAc...) asparagine glycans are attached at residues Asn433 and Asn447. Residue Glu526 participates in UDP-N-acetyl-alpha-D-glucosamine binding. Lys554 serves as a coordination point for substrate.

The protein belongs to the glycosyltransferase 18 family. N-glycosylated. Post-translationally, a secreted form is released from the membrane after cleavage by gamma-secretase.

It localises to the golgi apparatus membrane. The protein localises to the secreted. It catalyses the reaction N(4)-{beta-D-GlcNAc-(1-&gt;2)-[beta-D-GlcNAc-(1-&gt;4)]-alpha-D-Man-(1-&gt;3)-[beta-D-GlcNAc-(1-&gt;2)-alpha-D-Man-(1-&gt;6)]-beta-D-Man-(1-&gt;4)-beta-D-GlcNAc-(1-&gt;4)-beta-D-GlcNAc}-L-asparaginyl-[protein] + UDP-N-acetyl-alpha-D-glucosamine = N(4)-{beta-D-GlcNAc-(1-&gt;2)-[beta-D-GlcNAc-(1-&gt;4)]-alpha-D-Man-(1-&gt;3)-[beta-D-GlcNAc-(1-&gt;2)-[beta-D-GlcNAc-(1-&gt;6)]-alpha-D-Man-(1-&gt;6)]-beta-D-Man-(1-&gt;4)-beta-D-GlcNAc-(1-&gt;4)-beta-D-GlcNAc}-L-asparaginyl-[protein] + UDP + H(+). The protein operates within protein modification; protein glycosylation. Activity is increased by Mn(2+) and Mg(2+). Functionally, catalyzes the addition of N-acetylglucosamine (GlcNAc) in beta 1-6 linkage to the alpha-linked mannose of biantennary N-linked oligosaccharides. Catalyzes an important step in the biosynthesis of branched, complex-type N-glycans, such as those found on EGFR, TGFR (TGF-beta receptor) and CDH2. Via its role in the biosynthesis of complex N-glycans, plays an important role in the activation of cellular signaling pathways, reorganization of the actin cytoskeleton, cell-cell adhesion and cell migration. MGAT5-dependent EGFR N-glycosylation enhances the interaction between EGFR and LGALS3 and thereby prevents rapid EGFR endocytosis and prolongs EGFR signaling. Required for efficient interaction between TGFB1 and its receptor. Enhances activation of intracellular signaling pathways by several types of growth factors, including FGF2, PDGF, IGF, TGFB1 and EGF. MGAT5-dependent CDH2 N-glycosylation inhibits CDH2-mediated homotypic cell-cell adhesion and contributes to the regulation of downstream signaling pathways. Promotes cell migration. Contributes to the regulation of the inflammatory response. MGAT5-dependent TCR N-glycosylation enhances the interaction between TCR and LGALS3, limits agonist-induced TCR clustering, and thereby dampens TCR-mediated responses to antigens. Required for normal leukocyte evasation and accumulation at sites of inflammation. Inhibits attachment of monocytes to the vascular endothelium and subsequent monocyte diapedesis. Promotes proliferation of umbilical vein endothelial cells and angiogenesis, at least in part by promoting the release of the growth factor FGF2 from the extracellular matrix. The chain is Alpha-1,6-mannosylglycoprotein 6-beta-N-acetylglucosaminyltransferase A (MGAT5) from Homo sapiens (Human).